Here is a 467-residue protein sequence, read N- to C-terminus: MNTRQLLSVGIDIGTTTTQVIFSRLELVNRAAVSQVPRYEFIKRDISWQSPVFFTPVDKQGGLKEVELKALILAQYQAAGIAPESVDSGAIIITGESAKTRNARPAVMALSQSLGDFVVASAGPHLESVIAGHGAGAQSLSEQRMCRVLNIDIGGGTSNYALFDAGKVSGTACLNVGGRLLETDAQGRVVYAHQPGQMIIDEVFGSGTDARALAAAQLGQVARRMADLIVEVITGALSPLAQSLMQTGLLPADITPEVITLSGGVGECYRNQPADPFCFSDIGPLLATALHEHPRLREMNVQFPAQTVRATVIGAGAHTLSLSGSTIWLEDVQLPLRNLPVAIPQDDADLVNAWRQALLQLDLDPQTDAYVLALPATLPVRYAALLTVINALTAFVARYPNPHPLLVVAEQDFGKALGMLLRPQLPQLPLAVIDEVVVRAGDYIDIGTPLFGGSVVPVTVKSLAFPS.

It belongs to the EutA family.

The protein localises to the bacterial microcompartment. Its pathway is amine and polyamine degradation; ethanolamine degradation. In terms of biological role, reactivates suicidally inhibited ethanolamine ammonia-lyase (EAL), cyanocobalamin-inactivated EAL and O(2)-inactivated EAL; requires Mg(2+), ATP and adenosylcobalamin. Reactivation probably occurs by the ATP-dependent exchange of cobalamin. Protects EAL from inhibition by CN-B12, does not have adenosylation activity. Its function is as follows. Expression of the eut operon allows this bacteria to use ethanolamine as a carbon, nitrogen and energy source. It relies on cobalamin (vitamin B12) both as a cofactor for the ethanolamine ammonia-lyase (EAL) activity and to induce the operon. EA enhances bacterial survival in macrophages in a concentration-dependent manner, suggesting it is an important nutrient during infection. This chain is Ethanolamine ammonia-lyase reactivase EutA, found in Salmonella typhimurium (strain LT2 / SGSC1412 / ATCC 700720).